A 485-amino-acid chain; its full sequence is Efflux pump bik6 (485 aa).

A run of 6 helical transmembrane segments spans residues 42 to 62 (VYTTALWALTTCWITFASAIY), 86 to 106 (LLIFGFALGPMLWAPLCEVYG), 108 to 128 (KWPALAPYFISAAFAFGTATA), 139 to 159 (FFAGVFGSSPISITGGSIVDI), 172 to 192 (YGITIAAAPTLGPIIGGAFIA), and 199 to 219 (WTEYLTGIVMMVQFVLDALWL). Asn241 carries an N-linked (GlcNAc...) asparagine glycan. 6 helical membrane-spanning segments follow: residues 269–289 (MLLDPICLLLTIYTSFVYAIL), 306–326 (WGPVVSQLPFLSLLIGCLFAA), 353–373 (LPPMMVGGFAFSAGLFLFGWT), 379–399 (SSPWPSIIGVFLTGVGFTTIF), 417–437 (AIAANTFVRSMAAGAFPLFVW), and 447–467 (WGSTIFACISVLLLPAPFLFF).

The protein belongs to the major facilitator superfamily.

The protein resides in the membrane. Its function is as follows. Efflux pump; part of the gene cluster that mediates the biosynthesis of bikaverin, a red pigment also considered as a mycotoxin. The polypeptide is Efflux pump bik6 (Gibberella fujikuroi (strain CBS 195.34 / IMI 58289 / NRRL A-6831) (Bakanae and foot rot disease fungus)).